The primary structure comprises 288 residues: 4-hydroxy-tetrahydrodipicolinate synthase (288 aa).

Pyruvate is bound at residue Thr-47. Tyr-136 (proton donor/acceptor) is an active-site residue. The active-site Schiff-base intermediate with substrate is the Lys-164. Pyruvate is bound at residue Ile-204.

This sequence belongs to the DapA family. As to quaternary structure, homotetramer; dimer of dimers.

The protein localises to the cytoplasm. It carries out the reaction L-aspartate 4-semialdehyde + pyruvate = (2S,4S)-4-hydroxy-2,3,4,5-tetrahydrodipicolinate + H2O + H(+). Its pathway is amino-acid biosynthesis; L-lysine biosynthesis via DAP pathway; (S)-tetrahydrodipicolinate from L-aspartate: step 3/4. Its function is as follows. Catalyzes the condensation of (S)-aspartate-beta-semialdehyde [(S)-ASA] and pyruvate to 4-hydroxy-tetrahydrodipicolinate (HTPA). The polypeptide is 4-hydroxy-tetrahydrodipicolinate synthase (Leuconostoc mesenteroides subsp. mesenteroides (strain ATCC 8293 / DSM 20343 / BCRC 11652 / CCM 1803 / JCM 6124 / NCDO 523 / NBRC 100496 / NCIMB 8023 / NCTC 12954 / NRRL B-1118 / 37Y)).